The primary structure comprises 297 residues: Small ribosomal subunit protein uS9m (297 aa).

Residues Val278–Arg297 are disordered.

This sequence belongs to the universal ribosomal protein uS9 family.

It is found in the mitochondrion. In Kluyveromyces lactis (strain ATCC 8585 / CBS 2359 / DSM 70799 / NBRC 1267 / NRRL Y-1140 / WM37) (Yeast), this protein is Small ribosomal subunit protein uS9m (MRPS9).